The sequence spans 445 residues: Phosphoglucosamine mutase (445 aa).

Ser-102 functions as the Phosphoserine intermediate in the catalytic mechanism. Mg(2+)-binding residues include Ser-102, Asp-241, Asp-243, and Asp-245. The residue at position 102 (Ser-102) is a Phosphoserine.

It belongs to the phosphohexose mutase family. Requires Mg(2+) as cofactor. Post-translationally, activated by phosphorylation.

It carries out the reaction alpha-D-glucosamine 1-phosphate = D-glucosamine 6-phosphate. In terms of biological role, catalyzes the conversion of glucosamine-6-phosphate to glucosamine-1-phosphate. The protein is Phosphoglucosamine mutase of Novosphingobium aromaticivorans (strain ATCC 700278 / DSM 12444 / CCUG 56034 / CIP 105152 / NBRC 16084 / F199).